Here is a 513-residue protein sequence, read N- to C-terminus: Putative ribose/galactose/methyl galactoside import ATP-binding protein 3 (513 aa).

ABC transporter domains are found at residues 15–252 (IELT…VGRQ) and 263–508 (TSAN…TQRE). 47 to 54 (GENGAGKS) contacts ATP.

The protein belongs to the ABC transporter superfamily. Carbohydrate importer 2 (CUT2) (TC 3.A.1.2) family.

The protein resides in the cell inner membrane. It catalyses the reaction D-ribose(out) + ATP + H2O = D-ribose(in) + ADP + phosphate + H(+). The catalysed reaction is D-galactose(out) + ATP + H2O = D-galactose(in) + ADP + phosphate + H(+). Functionally, part of an ABC transporter complex involved in carbohydrate import. Could be involved in ribose, galactose and/or methyl galactoside import. Responsible for energy coupling to the transport system. The sequence is that of Putative ribose/galactose/methyl galactoside import ATP-binding protein 3 from Burkholderia ambifaria (strain ATCC BAA-244 / DSM 16087 / CCUG 44356 / LMG 19182 / AMMD) (Burkholderia cepacia (strain AMMD)).